The primary structure comprises 243 residues: Uridylate kinase (243 aa).

An ATP-binding site is contributed by 15–18; it reads KLSG. The tract at residues 23 to 28 is involved in allosteric activation by GTP; sequence GEEGFG. Position 57 (Gly-57) interacts with UMP. The ATP site is built by Gly-58 and Arg-62. Residues Asp-77 and 138 to 145 each bind UMP; that span reads TGNPFFTT. ATP contacts are provided by Thr-165, Phe-171, and Asp-174.

Belongs to the UMP kinase family. In terms of assembly, homohexamer.

Its subcellular location is the cytoplasm. It catalyses the reaction UMP + ATP = UDP + ADP. It functions in the pathway pyrimidine metabolism; CTP biosynthesis via de novo pathway; UDP from UMP (UMPK route): step 1/1. Its activity is regulated as follows. Allosterically activated by GTP. Inhibited by UTP. In terms of biological role, catalyzes the reversible phosphorylation of UMP to UDP. The sequence is that of Uridylate kinase from Aliivibrio fischeri (strain ATCC 700601 / ES114) (Vibrio fischeri).